The primary structure comprises 74 residues: UPF0435 protein Bcer98_0391 (74 aa).

Belongs to the UPF0435 family.

This is UPF0435 protein Bcer98_0391 from Bacillus cytotoxicus (strain DSM 22905 / CIP 110041 / 391-98 / NVH 391-98).